We begin with the raw amino-acid sequence, 723 residues long: FACT complex subunit Ssrp1 (723 aa).

Serine 443 is subject to Phosphoserine. Disordered regions lie at residues 459-564 (EARE…AFML) and 586-723 (AKKG…EASD). 2 stretches are compositionally biased toward acidic residues: residues 464 to 478 (EEDD…ESTD) and 486 to 507 (NESD…DDSD). Residues 531–557 (KKEKKHKEKERTKKPSKKKKDSGKPKR) show a composition bias toward basic residues. The HMG box DNA-binding region spans 555–621 (PKRATTAFML…RYHDEMRNYK (67 aa)). Over residues 586–621 (AKKGGEMWKELKDKSKWEDAAAKDKQRYHDEMRNYK) the composition is skewed to basic and acidic residues. Position 628 is a phosphoserine (serine 628). Polar residues predominate over residues 644 to 656 (PSPSKKANTSGSG). 2 positions are modified to phosphoserine: serine 664 and serine 668. Residues 664–676 (SDDDSTSSDDEKD) are compositionally biased toward acidic residues. Phosphothreonine is present on threonine 669. Phosphoserine occurs at positions 670 and 671. Residues 677-692 (NEPAKKKSKPPSDGDA) are compositionally biased toward basic and acidic residues. Acidic residues predominate over residues 702–723 (EPEESEEDSNASDEDEEDEASD).

This sequence belongs to the SSRP1 family. Component of the FACT complex, a stable heterodimer of dre4/spt16 and Ssrp. Interacts with CHD1 and TRL/GAGA. In terms of tissue distribution, expressed at highest levels in nurse cells of the ovary.

Its subcellular location is the nucleus. It localises to the chromosome. The protein localises to the nucleolus. Its function is as follows. Component of the FACT complex, a general chromatin factor that acts to reorganize nucleosomes. The FACT complex is involved in multiple processes that require DNA as a template such as mRNA elongation, DNA replication and DNA repair. During transcription elongation the FACT complex acts as a histone chaperone that both destabilizes and restores nucleosomal structure. It facilitates the passage of RNA polymerase II and transcription by promoting the dissociation of one histone H2A-H2B dimer from the nucleosome, then subsequently promotes the reestablishment of the nucleosome following the passage of RNA polymerase II. Binds specifically to single-stranded DNA and RNA with highest affinity for nucleotides G and U. The FACT complex is required for expression of Hox genes. This chain is FACT complex subunit Ssrp1 (Ssrp), found in Drosophila melanogaster (Fruit fly).